A 578-amino-acid polypeptide reads, in one-letter code: Adhesion G protein-coupled receptor A1 (578 aa).

The Extracellular segment spans residues 1-22; the sequence is MTQWDLKTVLSLPQYPGEFLHP. Residues 23–43 form a helical membrane-spanning segment; that stretch reads VVYACTAVMLLCLLASVITYI. Residues 44–56 are Cytoplasmic-facing; the sequence is LHQSAIRISRKGR. A helical transmembrane segment spans residues 57 to 77; it reads HALLNFCFHAALTFTVFAGGI. Topologically, residues 78 to 87 are extracellular; sequence NRTQHPILCQ. Residues 88–108 form a helical membrane-spanning segment; the sequence is AVGIALHYSTLSTMLWIGVTA. The Cytoplasmic portion of the chain corresponds to 109-137; the sequence is RNIYKQVTKKALPCPGADQPPYPKQPLLR. The chain crosses the membrane as a helical span at residues 138–158; the sequence is FYLISGGVPFIICGVTAATNI. The Extracellular portion of the chain corresponds to 159 to 178; sequence RNYGTEDEDVAYCWMAWEPS. Residues 179–199 form a helical membrane-spanning segment; sequence LGAFYGPAAFIALVTCVYFLC. Topologically, residues 200–262 are cytoplasmic; the sequence is TYVQLRRHPE…NEHSFKAQLR (63 aa). The disordered stretch occupies residues 216–236; the sequence is ERTEEQQRLAVPESGHRHGVR. The chain crosses the membrane as a helical span at residues 263 to 283; it reads AAAFTLFLFTATWTFGALAVS. Topologically, residues 284–289 are extracellular; sequence QGHFLD. A helical membrane pass occupies residues 290–310; sequence MIFSCLYGAFCVTLGLFVLIH. 2 disordered regions span residues 463 to 486 and 537 to 578; these read PSSL…EGPM and SLPF…ETTV. The segment covering 469–481 has biased composition (low complexity); that stretch reads SPHSSRSESPTSS. A compositionally biased stretch (polar residues) spans 537 to 548; sequence SLPFGGPSQNGL.

Belongs to the G-protein coupled receptor 2 family. Adhesion G-protein coupled receptor (ADGR) subfamily. Predominantly expressed in CNS.

Its subcellular location is the membrane. This Mus musculus (Mouse) protein is Adhesion G protein-coupled receptor A1.